Consider the following 406-residue polypeptide: Sensor histidine kinase YxjM (406 aa).

Topologically, residues 1–13 (MNGQTPARHYYKK) are cytoplasmic. The helical transmembrane segment at 14 to 34 (LVPSLILILNCIQFLSHPTKA) threads the bilayer. Residues 35 to 36 (DP) are Extracellular-facing. Residues 37–57 (ILLAFVFAVYLAFIWIIPYVA) form a helical membrane-spanning segment. Residue serine 58 is a topological domain, cytoplasmic. Helical transmembrane passes span 59-79 (TAVS…FWAV) and 80-100 (SGQE…YAAF). Residue arginine 101 is a topological domain, cytoplasmic. Residues 102–122 (LPSRLSLIFTACLIGGNILLL) traverse the membrane as a helical segment. The Extracellular portion of the chain corresponds to 123-125 (SSQ). A helical transmembrane segment spans residues 126 to 146 (GGSLNTIISNISIMLGLYVLF). Topologically, residues 147 to 406 (SSMRFRREAR…TNKEQKDEQR (260 aa)) are cytoplasmic. The 188-residue stretch at 209–396 (DIHDSIGHEL…KIELSLPLMT (188 aa)) folds into the Histidine kinase domain. The residue at position 211 (histidine 211) is a Phosphohistidine; by autocatalysis.

It localises to the cell membrane. The enzyme catalyses ATP + protein L-histidine = ADP + protein N-phospho-L-histidine.. Probable member of the two-component regulatory system YxjM/YxjL. May activate YxjL by phosphorylation. This Bacillus subtilis (strain 168) protein is Sensor histidine kinase YxjM (yxjM).